A 459-amino-acid polypeptide reads, in one-letter code: Phosphomethylpyrimidine synthase (459 aa).

Substrate-binding positions include Asn80, Met109, Tyr139, His175, 195 to 197 (SRG), 236 to 239 (DSLR), and Glu275. His279 is a binding site for Zn(2+). Residue Tyr302 participates in substrate binding. A Zn(2+)-binding site is contributed by His343. [4Fe-4S] cluster-binding residues include Cys423, Cys426, and Cys431.

The protein belongs to the ThiC family. It depends on [4Fe-4S] cluster as a cofactor.

The enzyme catalyses 5-amino-1-(5-phospho-beta-D-ribosyl)imidazole + S-adenosyl-L-methionine = 4-amino-2-methyl-5-(phosphooxymethyl)pyrimidine + CO + 5'-deoxyadenosine + formate + L-methionine + 3 H(+). Its pathway is cofactor biosynthesis; thiamine diphosphate biosynthesis. Functionally, catalyzes the synthesis of the hydroxymethylpyrimidine phosphate (HMP-P) moiety of thiamine from aminoimidazole ribotide (AIR) in a radical S-adenosyl-L-methionine (SAM)-dependent reaction. The sequence is that of Phosphomethylpyrimidine synthase from Prochlorococcus marinus (strain MIT 9303).